We begin with the raw amino-acid sequence, 427 residues long: Trigger factor (427 aa).

One can recognise a PPIase FKBP-type domain in the interval 163-248 (GDTVVIDFVG…IHEVKAKEVP (86 aa)).

This sequence belongs to the FKBP-type PPIase family. Tig subfamily.

The protein localises to the cytoplasm. It catalyses the reaction [protein]-peptidylproline (omega=180) = [protein]-peptidylproline (omega=0). In terms of biological role, involved in protein export. Acts as a chaperone by maintaining the newly synthesized protein in an open conformation. Functions as a peptidyl-prolyl cis-trans isomerase. The polypeptide is Trigger factor (Streptococcus pneumoniae serotype 4 (strain ATCC BAA-334 / TIGR4)).